Here is a 280-residue protein sequence, read N- to C-terminus: F420-dependent methylenetetrahydromethanopterin dehydrogenase (280 aa).

This sequence belongs to the MTD family.

The catalysed reaction is 5,10-methylenetetrahydromethanopterin + oxidized coenzyme F420-(gamma-L-Glu)(n) + 2 H(+) = 5,10-methenyl-5,6,7,8-tetrahydromethanopterin + reduced coenzyme F420-(gamma-L-Glu)(n). It participates in one-carbon metabolism; methanogenesis from CO(2); 5,10-methylene-5,6,7,8-tetrahydromethanopterin from 5,10-methenyl-5,6,7,8-tetrahydromethanopterin (coenzyme F420 route): step 1/1. Its function is as follows. Catalyzes the reversible reduction of methenyl-H(4)MPT(+) to methylene-H(4)MPT. This chain is F420-dependent methylenetetrahydromethanopterin dehydrogenase, found in Methanosphaerula palustris (strain ATCC BAA-1556 / DSM 19958 / E1-9c).